The sequence spans 468 residues: Beta-amylase (468 aa).

Positions 1-36 are cleaved as a signal peptide; sequence MTLYRSLWKKGCMLLLSLVLSLTAFIGSPSNTASAA. D76 is a substrate binding site. Ca(2+)-binding residues include E83 and D87. Substrate-binding residues include H116 and D124. A disulfide bond links C118 and C126. Ca(2+) is bound at residue E170. The active-site Proton donor is E198. Positions 314, 319, and 357 each coordinate substrate. E394 acts as the Proton acceptor in catalysis. Substrate is bound by residues 395 to 396 and R423; that span reads NA.

It belongs to the glycosyl hydrolase 14 family. It depends on Ca(2+) as a cofactor.

The enzyme catalyses Hydrolysis of (1-&gt;4)-alpha-D-glucosidic linkages in polysaccharides so as to remove successive maltose units from the non-reducing ends of the chains.. This chain is Beta-amylase, found in Cytobacillus firmus (Bacillus firmus).